Reading from the N-terminus, the 392-residue chain is Alanine--glyoxylate aminotransferase (392 aa).

Position 209 is an N6-(pyridoxal phosphate)lysine (Lys-209). N6-acetyllysine; alternate is present on Lys-225. An N6-succinyllysine; alternate modification is found at Lys-225. An N6-acetyllysine mark is found at Lys-234 and Lys-312. Arg-360 contributes to the substrate binding site. Residues 390 to 392 (SQL) carry the Microbody targeting signal motif.

This sequence belongs to the class-V pyridoxal-phosphate-dependent aminotransferase family. In terms of assembly, homodimer. It depends on pyridoxal 5'-phosphate as a cofactor.

It is found in the peroxisome. It carries out the reaction L-serine + pyruvate = 3-hydroxypyruvate + L-alanine. The catalysed reaction is glyoxylate + L-alanine = glycine + pyruvate. Functionally, peroxisomal aminotransferase that catalyzes the transamination of glyoxylate to glycine and contributes to the glyoxylate detoxification. Also catalyzes the transamination between L-serine and pyruvate and contributes to gluconeogenesis from the L-serine metabolism. The sequence is that of Alanine--glyoxylate aminotransferase from Oryctolagus cuniculus (Rabbit).